The sequence spans 78 residues: MICPRCADEQIEVMAKSPVKDVWTVYQCQHCLYTWRDTEPLRRTSREHYPEAFRMTQKDIDDAPMVPSIPPLLAEGKR.

Involved in the non-oxidative decarboxylation and detoxification of phenolic derivatives under anaerobic conditions, however the precise biochemical function in metabolism of phenolic acid is unknown. This chain is Protein EcdD, found in Escherichia coli O157:H7.